Reading from the N-terminus, the 253-residue chain is Transmembrane protein 51 (253 aa).

2 helical membrane-spanning segments follow: residues 17–37 and 65–85; these read IGLGMLVLGVIMAMWNLVPGF and VAYVLVGAGVMLLLLSICLSI. 2 disordered regions span residues 93 to 133 and 164 to 253; these read QGED…YVPS and LTGL…RPPD. Acidic residues predominate over residues 113-124; that stretch reads EDSQEEEEEDEE. A Phosphoserine modification is found at Ser-115. Over residues 164–176 the composition is skewed to polar residues; that stretch reads LTGLDETTPTSTR. Ser-182 and Ser-192 each carry phosphoserine. Basic residues predominate over residues 194-205; the sequence is LAKRLKPLKVRR. Basic and acidic residues predominate over residues 206–217; the sequence is IKSEKLHLKDFR. Residues 224 to 238 are compositionally biased toward pro residues; it reads NVPPPSIEPLTPPPQ. The segment covering 242–253 has biased composition (basic and acidic residues); it reads VQEKAPDTRPPD.

The protein resides in the membrane. In Homo sapiens (Human), this protein is Transmembrane protein 51 (TMEM51).